The sequence spans 372 residues: Tetraacyldisaccharide 4'-kinase (372 aa).

60 to 67 provides a ligand contact to ATP; that stretch reads TVGGSGKT.

It belongs to the LpxK family.

It catalyses the reaction a lipid A disaccharide + ATP = a lipid IVA + ADP + H(+). It participates in glycolipid biosynthesis; lipid IV(A) biosynthesis; lipid IV(A) from (3R)-3-hydroxytetradecanoyl-[acyl-carrier-protein] and UDP-N-acetyl-alpha-D-glucosamine: step 6/6. Functionally, transfers the gamma-phosphate of ATP to the 4'-position of a tetraacyldisaccharide 1-phosphate intermediate (termed DS-1-P) to form tetraacyldisaccharide 1,4'-bis-phosphate (lipid IVA). The protein is Tetraacyldisaccharide 4'-kinase of Psychrobacter cryohalolentis (strain ATCC BAA-1226 / DSM 17306 / VKM B-2378 / K5).